Here is a 409-residue protein sequence, read N- to C-terminus: Peptide chain release factor subunit 1 (409 aa).

Belongs to the eukaryotic release factor 1 family. In terms of assembly, heterodimer of two subunits, one of which binds GTP.

It localises to the cytoplasm. Functionally, directs the termination of nascent peptide synthesis (translation) in response to the termination codons UAA, UAG and UGA. This chain is Peptide chain release factor subunit 1, found in Methanopyrus kandleri (strain AV19 / DSM 6324 / JCM 9639 / NBRC 100938).